We begin with the raw amino-acid sequence, 1370 residues long: Zinc finger MYM-type protein 3 (1370 aa).

Composition is skewed to low complexity over residues 1 to 12 and 52 to 61; these read MDPSDFPSPFDP and PSSGALDLLD. Disordered regions lie at residues 1–72 and 90–301; these read MDPS…DPGV and PSPP…QRAG. The segment covering 230 to 253 has biased composition (basic and acidic residues); it reads ASEKPPERKRSERVRRAEPPKPEV. S263 and S267 each carry phosphoserine. Positions 263–279 are enriched in acidic residues; sequence SDEDSDAMVDDPNDEDF. Residues K308, K320, and K328 each participate in a glycyl lysine isopeptide (Lys-Gly) (interchain with G-Cter in SUMO2) cross-link. 9 consecutive MYM-type zinc fingers follow at residues 332 to 366, 378 to 422, 429 to 464, 477 to 511, 521 to 559, 567 to 604, 612 to 646, 653 to 692, and 699 to 733; these read QLFCSSSCLTTFSKKPSGKKTCTFCKKEIWNTKDS, HEFC…LHEV, HRLCSDSCFSKFRANKGLKTNCCDQCGAYIYTKTGS, KRFCNTTCLGAYKKKNTRVYPCVWCKTLCKNFEML, SLFCSLCCTTSYKVKQAGLTGPPRPCSFCRRSLSDPCYY, YQFCSPSCWTKFQRTSPEGGIHLSCHYCHSLFSGKPEV, FQFCCRDCCEDFKRLRGVVSQCEHCRQEKLLHEKL, KSFCSEGCVLLYKQDFTKKLGLCCITCTYCSQTCQRGVTE, and WDFCSEDCKSKYLLWYCKAARCHACKRQGKLLETI. S464 bears the Phosphoserine mark. Positions 759 to 794 are enriched in polar residues; sequence NLDTQSGPESLLNSQSPESKPQTPSQTKVENSNTVR. Residues 759–830 are disordered; it reads NLDTQSGPES…PPPPATPRKN (72 aa). Residues K778 and K786 each participate in a glycyl lysine isopeptide (Lys-Gly) (interchain with G-Cter in SUMO2) cross-link. The residue at position 795 (T795) is a Phosphothreonine. K804 participates in a covalent cross-link: Glycyl lysine isopeptide (Lys-Gly) (interchain with G-Cter in SUMO2). Pro residues predominate over residues 815–826; that stretch reads APTPPPPPPPAT. A phosphothreonine mark is found at T817 and T826. Residues K847, K861, K920, and K1275 each participate in a glycyl lysine isopeptide (Lys-Gly) (interchain with G-Cter in SUMO2) cross-link.

In terms of assembly, may be a component of a BHC histone deacetylase complex that contains HDAC1, HDAC2, HMG20B/BRAF35, KDM1A, RCOR1/CoREST, PHF21A/BHC80, ZMYM2, ZNF217, ZMYM3, GSE1 and GTF2I. Most abundant in brain, moderate in muscle and heart, low in other tissues except placenta.

It is found in the nucleus. Its function is as follows. Plays a role in the regulation of cell morphology and cytoskeletal organization. This is Zinc finger MYM-type protein 3 (ZMYM3) from Homo sapiens (Human).